A 277-amino-acid polypeptide reads, in one-letter code: Energy-coupling factor transporter ATP-binding protein EcfA1 (277 aa).

The 236-residue stretch at 5–240 (LEVENLVFKY…SEDMVEIGLD (236 aa)) folds into the ABC transporter domain. Residue 40–47 (GQNGSGKS) participates in ATP binding.

It belongs to the ABC transporter superfamily. Energy-coupling factor EcfA family. In terms of assembly, forms a stable energy-coupling factor (ECF) transporter complex composed of 2 membrane-embedded substrate-binding proteins (S component), 2 ATP-binding proteins (A component) and 2 transmembrane proteins (T component).

The protein localises to the cell membrane. Functionally, ATP-binding (A) component of a common energy-coupling factor (ECF) ABC-transporter complex. Unlike classic ABC transporters this ECF transporter provides the energy necessary to transport a number of different substrates. The protein is Energy-coupling factor transporter ATP-binding protein EcfA1 of Lactococcus lactis subsp. lactis (strain IL1403) (Streptococcus lactis).